A 1121-amino-acid chain; its full sequence is Myelin transcription factor 1 (1121 aa).

Disordered regions lie at residues 1–156 and 200–376; these read MSLE…SKGS and EAAE…MTRG. The segment at 21-64 adopts a CCHHC-type 1 zinc-finger fold; sequence PETTAADLSCPTPGCTGSGHVRGKYSRHRSLQSCPLAKKRKLEG. Residues Cys30, Cys35, His48, and Cys54 each coordinate Zn(2+). Over residues 41-50 the composition is skewed to basic residues; the sequence is VRGKYSRHRS. Composition is skewed to basic and acidic residues over residues 62-71 and 123-132; these read LEGAEAEHLV and DEIHRPETAE. The span at 147 to 156 shows a compositional bias: low complexity; it reads GSATASSKGS. The span at 258–308 shows a compositional bias: acidic residues; the sequence is EEEDEEEEEEEEEEEEDEEEEEEEEEEEEEEEEEEEEEEEEEEEEEEEEAA. Residues 346 to 358 are compositionally biased toward basic and acidic residues; the sequence is VRSDDDKDEDTHS. 2 consecutive CCHHC-type zinc fingers follow at residues 433–476 and 477–520; these read SRAE…PPEI and LAMH…KLAK. Residues Cys442, Cys447, His460, Cys466, Cys486, Cys491, His504, and Cys510 each coordinate Zn(2+). Disordered regions lie at residues 517-540 and 668-774; these read KLAKSHEKQQPQTGDPSKSSSNSD and TLDL…EERK. Polar residues predominate over residues 526–540; that stretch reads QPQTGDPSKSSSNSD. Positions 705–723 are enriched in low complexity; the sequence is SSTSAPSSSMTSPQSSQAS. Residues 724–733 show a composition bias toward basic and acidic residues; it reads RQDEWDRPLD. Positions 759-770 are enriched in acidic residues; sequence EADDQEVSEENF. 4 CCHHC-type zinc fingers span residues 791-834, 835-878, 884-927, and 937-980; these read KDIK…LRNL, MAAH…GVKV, DKED…QKEG, and KSLK…GKKG. Residues Cys800, Cys805, His818, Cys824, Cys844, Cys849, His862, Cys868, Cys893, Cys898, His911, Cys917, Cys946, Cys951, His964, and Cys970 each contribute to the Zn(2+) site.

It belongs to the MYT1 family. As to quaternary structure, interacts with STEAP3. As to expression, mostly in developing nervous system. Expressed in neural progenitors and oligodendrocyte lineage cells. More highly expressed in oligodendrocyte progenitors than in differentiated oligodendrocytes.

Its subcellular location is the nucleus. Functionally, binds to the promoter region of genes encoding proteolipid proteins of the central nervous system. May play a role in the development of neurons and oligodendroglia in the CNS. May regulate a critical transition point in oligodendrocyte lineage development by modulating oligodendrocyte progenitor proliferation relative to terminal differentiation and up-regulation of myelin gene transcription. The sequence is that of Myelin transcription factor 1 (MYT1) from Homo sapiens (Human).